The chain runs to 297 residues: Phospholipid scramblase 2 (297 aa).

The proline-rich domain (PRD) stretch occupies residues 1 to 72 (MRSWNSLFCL…NQPGRPEGVP (72 aa)). Residues 1-276 (MRSWNSLFCL…IQFPRDLDVK (276 aa)) lie on the Cytoplasmic side of the membrane. Residue Thr-149 is modified to Phosphothreonine; by PKC. S-palmitoyl cysteine attachment occurs at residues Cys-172, Cys-173, Cys-174, Cys-176, and Cys-177. A helical transmembrane segment spans residues 277 to 293 (MKAVMIGACFLIDYMFF). Residues 294-297 (ERTR) lie on the Extracellular side of the membrane.

Belongs to the phospholipid scramblase family. Ca(2+) serves as cofactor. In terms of tissue distribution, expression of isoform 1 seems restricted to testis.

The protein resides in the membrane. Its subcellular location is the nucleus. It catalyses the reaction a 1,2-diacyl-sn-glycero-3-phosphocholine(in) = a 1,2-diacyl-sn-glycero-3-phosphocholine(out). Functionally, may catalyze calcium-induced ATP-independent rapid bidirectional and non-specific movement of phospholipids (lipid scrambling or lipid flip-flop) between the inner and outer leaflet of the plasma membrane. Has no phospholipid scramblase activity, due to the lack of a N-terminal proline-rich domain. In Homo sapiens (Human), this protein is Phospholipid scramblase 2.